The following is a 196-amino-acid chain: C-type lectin domain family 2 member F (196 aa).

The disordered stretch occupies residues 1-21; that stretch reads MNAQCLKKPEEGESSPGTGDK. Residues 1-41 are Cytoplasmic-facing; the sequence is MNAQCLKKPEEGESSPGTGDKILQRNSLRAISPESSAKLYC. The chain crosses the membrane as a helical; Signal-anchor for type II membrane protein span at residues 42–62; it reads CCGVIMVLTVAVVALSVALPA. Residues 63 to 196 are Extracellular-facing; it reads TKTEQILINK…SRSSNYMLQC (134 aa). Cys-77 and Cys-88 are oxidised to a cystine. In terms of domain architecture, C-type lectin spans 84–187; that stretch reads VGNKCFYFSE…DYIPRKWICS (104 aa). N-linked (GlcNAc...) asparagine glycosylation occurs at Asn-97. A disulfide bridge connects residues Cys-105 and Cys-186.

The protein localises to the cell membrane. Its function is as follows. Lectin-type cell surface receptor. In Mus musculus (Mouse), this protein is C-type lectin domain family 2 member F (Clec2f).